The sequence spans 101 residues: Citrate lyase acyl carrier protein (101 aa).

Ser14 is modified (O-(phosphoribosyl dephospho-coenzyme A)serine).

Belongs to the CitD family. Oligomer with a subunit composition of (alpha,beta,gamma)6.

The protein localises to the cytoplasm. Its function is as follows. Covalent carrier of the coenzyme of citrate lyase. The chain is Citrate lyase acyl carrier protein from Latilactobacillus sakei subsp. sakei (strain 23K) (Lactobacillus sakei subsp. sakei).